We begin with the raw amino-acid sequence, 847 residues long: Guanine nucleotide exchange factor VAV3 (847 aa).

The region spanning 1 to 119 (MEPWKQCAQW…ETLSRLSRTP (119 aa)) is the Calponin-homology (CH) domain. Residue Y141 is modified to Phosphotyrosine. The DH domain maps to 192-371 (IRSCCLAEIR…KDLAQYVNEV (180 aa)). Positions 400 to 502 (RPQGDGEIRI…WLEQFEMALS (103 aa)) constitute a PH domain. A Phorbol-ester/DAG-type zinc finger spans residues 513–562 (FHDFKMHTFTRVTSCRVCQMLLRGTFYQGYLCFKCGAKAHKECLGRVDNC). The interval 560 to 847 (DNCGRVNSVE…FPSTYVEEDE (288 aa)) is sufficient for interaction with ROS1. The region spanning 592–660 (PGLPKMQVIR…PSDAVKPSPC (69 aa)) is the SH3 1 domain. The SH2 domain maps to 672–766 (WYAGPMERLQ…TLDTTLQFPY (95 aa)). The 60-residue stretch at 788–847 (KVLGIAIARYDFCARDMRELSLLKGDMVKIYTKMSANGWWRGEVNGRVGWFPSTYVEEDE) folds into the SH3 2 domain.

Interacts with the PH domain of APS. Interacts with ROS1; constitutive interaction that mediates VAV3 phosphorylation. Interacts (via SH2 domains) with the phosphorylated form of EPHA2. Phosphorylated. Phosphorylation can be mediated by ROS1. In osteoclasts, undergoes tyrosine phosphorylation in response to CSF1. Abundantly expressed in osteoclasts and mature osteoblasts. Also expressed in bone marrow macrophages (at protein level):.

Exchange factor for GTP-binding proteins RhoA, RhoG and, to a lesser extent, Rac1. Binds physically to the nucleotide-free states of those GTPases. Plays an important role in angiogenesis. Its recruitment by phosphorylated EPHA2 is critical for EFNA1-induced RAC1 GTPase activation and vascular endothelial cell migration and assembly. May be important for integrin-mediated signaling, at least in some cell types. In osteoclasts, along with SYK tyrosine kinase, required for signaling through integrin alpha-v/beta-1 (ITAGV-ITGB1), a crucial event for osteoclast proper cytoskeleton organization and function. This signaling pathway involves RAC1, but not RHO, activation. Necessary for proper wound healing. In the course of wound healing, required for the phagocytotic cup formation preceding macrophage phagocytosis of apoptotic neutrophils. Responsible for integrin beta-2-mediated macrophage adhesion and, to a lesser extent, contributes to beta-3-mediated adhesion. Does not affect integrin beta-1-mediated adhesion. The chain is Guanine nucleotide exchange factor VAV3 (Vav3) from Mus musculus (Mouse).